The following is a 62-amino-acid chain: Chromatin protein Cren7 1 (62 aa).

It belongs to the Cren7 family. In terms of assembly, monomer. Post-translationally, methylated at multiple sites, to varying extents.

It is found in the chromosome. The protein localises to the cytoplasm. Its function is as follows. A chromatin protein, binds double-stranded DNA without sequence specificity. Constrains negative DNA supercoils. The chain is Chromatin protein Cren7 1 (cren7-1) from Hyperthermus butylicus (strain DSM 5456 / JCM 9403 / PLM1-5).